Here is a 132-residue protein sequence, read N- to C-terminus: Translation initiation factor 5A (132 aa).

Residue K36 is modified to Hypusine.

The protein belongs to the eIF-5A family.

It localises to the cytoplasm. Functionally, functions by promoting the formation of the first peptide bond. The protein is Translation initiation factor 5A (eIF5A) of Caldivirga maquilingensis (strain ATCC 700844 / DSM 13496 / JCM 10307 / IC-167).